Here is a 41-residue protein sequence, read N- to C-terminus: Tachystatin-C (41 aa).

Intrachain disulfides connect Cys12–Cys28, Cys19–Cys33, and Cys27–Cys38.

Granular hemocytes, small secretory granules.

It is found in the secreted. Binds to chitin. Shows strong activity against E.coli (IC(50) is 1.2 ug/ml). Is also very active against S.aureus (IC(50) is 0.8 ug/ml), C.albicans (IC(50) is 0.9 ug/ml) and P.pastoris (IC(50) is 0.3 ug/ml). Binds to chitin (5.2 uM are required to obtain 50% of binding). Causes hemolysis on sheep erythrocytes, probably by forming ion-permeable pores. This chain is Tachystatin-C, found in Tachypleus tridentatus (Japanese horseshoe crab).